A 265-amino-acid chain; its full sequence is Novel plant SNARE 12 (265 aa).

Residues 1–217 (MASELPMSPH…IGRQVATDKC (217 aa)) lie on the Cytoplasmic side of the membrane. A coiled-coil region spans residues 32–106 (LDKIKDSSRQ…ALRKTYLNTL (75 aa)). At Ser74 the chain carries Phosphoserine. Residues 146-208 (MKRMDETDQA…KKASQLVKEI (63 aa)) enclose the t-SNARE coiled-coil homology domain. The helical; Anchor for type IV membrane protein transmembrane segment at 218–238 (IMAFLFLIVCGVIAIIIVKIV) threads the bilayer. The Vesicular portion of the chain corresponds to 239-265 (NPNNKDIRDIPGLAPPAQSRKLLYFRE).

The protein belongs to the novel plant SNARE family. Expressed in roots, stems, flower, siliques and leaves.

It is found in the membrane. In terms of biological role, vesicle trafficking protein that functions in the secretory pathway. The chain is Novel plant SNARE 12 (NPSN12) from Arabidopsis thaliana (Mouse-ear cress).